The chain runs to 207 residues: Redox-sensing transcriptional repressor Rex (207 aa).

Positions 15-54 (LYYRCLNRLYEEGIEYVASKDIAERLGIKSSQVRKDLSYF) form a DNA-binding region, H-T-H motif. 89 to 94 (GAGNIG) contributes to the NAD(+) binding site.

Belongs to the transcriptional regulatory Rex family. In terms of assembly, homodimer.

It is found in the cytoplasm. In terms of biological role, modulates transcription in response to changes in cellular NADH/NAD(+) redox state. This is Redox-sensing transcriptional repressor Rex from Thermosipho africanus (strain TCF52B).